A 991-amino-acid chain; its full sequence is uncharacterized protein (991 aa).

The first 17 residues, 1-17 (MLWPAALVAMFALAARA), serve as a signal peptide directing secretion. Disordered regions lie at residues 332 to 352 (DPLP…GETT), 392 to 425 (TTED…TTEG), 469 to 511 (EDST…EDTT), 542 to 569 (DTEA…TTPV), 587 to 641 (PAPT…NSLS), and 658 to 734 (ASSG…PPRI). Over residues 400–413 (TSTPTVTTVIDPTS) the composition is skewed to low complexity. Residues 414 to 425 (GAVTTESRTTEG) are compositionally biased toward polar residues. A compositionally biased stretch (low complexity) spans 472-493 (TTTARAAEYPTPTTTTVEPRPA). A compositionally biased stretch (polar residues) spans 542–554 (DTEAAQSATSISD). Low complexity-rich tracts occupy residues 556–569 (VTPE…TTPV) and 598–615 (ASTT…SHTP). Composition is skewed to polar residues over residues 617–628 (PQESTSTPSRAP) and 658–667 (ASSGPGASTG). Residues 668 to 682 (ATTAPISPPWSASPA) are compositionally biased toward low complexity. Polar residues predominate over residues 686–710 (VTTSAARTLEPSSTRKAVAAESTTA).

This is an uncharacterized protein from Psittacid herpesvirus 1 (isolate Amazon parrot/-/97-0001/1997) (PsHV-1).